A 531-amino-acid chain; its full sequence is Polypyrimidine tract-binding protein 2 (531 aa).

Met-1 carries the N-acetylmethionine modification. Residues Ser-26 and Ser-27 each carry the phosphoserine modification. RRM domains are found at residues 59 to 133 (RVLH…YSNH) and 181 to 257 (LRII…FSKL). Ser-308 is modified (phosphoserine). 2 consecutive RRM domains span residues 338 to 412 (TVLL…LSKH) and 455 to 529 (ATLH…FSKS).

As to quaternary structure, monomer. Interacts with NOVA1; the interaction is direct. Identified in a mRNP complex, at least composed of DHX9, DDX3X, ELAVL1, HNRNPU, IGF2BP1, ILF3, PABPC1, PCBP2, PTBP2, STAU1, STAU2, SYNCRIP and YBX1. Part of a ternary complex containing KHSRP and HNRPH1. Interacts with NOVA2; the interaction is direct.

The protein localises to the nucleus. Its function is as follows. RNA-binding protein which binds to intronic polypyrimidine tracts and mediates negative regulation of exons splicing. May antagonize in a tissue-specific manner the ability of NOVA1 to activate exon selection. In addition to its function in pre-mRNA splicing, plays also a role in the regulation of translation. The sequence is that of Polypyrimidine tract-binding protein 2 from Rattus norvegicus (Rat).